Reading from the N-terminus, the 274-residue chain is Small nuclear ribonucleoprotein-associated protein B (274 aa).

The region spanning 5 to 85 (PKSSKMLQYI…VVSMSVEAPP (81 aa)) is the Sm domain. The segment at 148 to 274 (PGGGVPPPMG…PMGRGGFQRK (127 aa)) is disordered. Repeat 1 spans residues 162–171 (PPQGFPPGGP). The 6 X 10 AA repeats of P-P-Q-G-F-P-P-G-G-P stretch occupies residues 162 to 265 (PPQGFPPGGP…PPQGFPPGGP (104 aa)). A compositionally biased stretch (low complexity) spans 173 to 187 (PQGAFNNNPNNNNGG). 5 tandem repeats follow at residues 188–197 (PPQGFPPGGP), 204–213 (PPQGFPPGGP), 225–234 (PPQGFPPGGP), 241–250 (PPQGFPPGGP), and 256–265 (PPQGFPPGGP). Positions 216–226 (GPNLNNGNMPP) are enriched in low complexity. Positions 265–274 (PMGRGGFQRK) are enriched in gly residues.

Belongs to the snRNP SmB/SmN family.

The protein localises to the cytoplasm. It is found in the cytosol. Its subcellular location is the nucleus. Plays a role in pre-mRNA splicing as a core component of the spliceosomal U1, U2, U4 and U5 small nuclear ribonucleoproteins (snRNPs), the building blocks of the spliceosome. The sequence is that of Small nuclear ribonucleoprotein-associated protein B (snrpb) from Dictyostelium discoideum (Social amoeba).